A 237-amino-acid polypeptide reads, in one-letter code: Cyclic-di-GMP-binding biofilm dispersal mediator protein (237 aa).

10–34 is a binding site for NAD(+); that stretch reads LILGGSRGIGAAIVRRFVTDGANVR. S132 provides a ligand contact to substrate. Catalysis depends on Y146, which acts as the Proton acceptor.

Belongs to the short-chain dehydrogenases/reductases (SDR) family.

In terms of biological role, increases biofilm dispersal. Acts by binding directly to the signaling molecule cyclic-di-GMP, which decreases the intracellular concentration of cyclic-di-GMP and leads to biofilm dispersal. Also controls other biofilm-related phenotypes such as cell motility, cell size, cell aggregation and production of extracellular DNA and extracellular polysaccharides (EPS). Does not act as a phosphodiesterase. The chain is Cyclic-di-GMP-binding biofilm dispersal mediator protein (bdcA) from Escherichia coli (strain K12).